We begin with the raw amino-acid sequence, 285 residues long: Pseudouridine-5'-phosphate glycosidase (285 aa).

The active-site Proton donor is Glu-17. Residues Lys-77 and Val-97 each contribute to the substrate site. Asp-126 contacts Mn(2+). 128–130 is a binding site for substrate; the sequence is SQD. The Nucleophile role is filled by Lys-147.

This sequence belongs to the pseudouridine-5'-phosphate glycosidase family. As to quaternary structure, homotrimer. It depends on Mn(2+) as a cofactor.

The enzyme catalyses D-ribose 5-phosphate + uracil = psi-UMP + H2O. Its function is as follows. Catalyzes the reversible cleavage of pseudouridine 5'-phosphate (PsiMP) to ribose 5-phosphate and uracil. Functions biologically in the cleavage direction, as part of a pseudouridine degradation pathway. This is Pseudouridine-5'-phosphate glycosidase from Thermotoga sp. (strain RQ2).